A 223-amino-acid polypeptide reads, in one-letter code: DNA mismatch repair protein MutH (223 aa).

Belongs to the MutH family.

The protein localises to the cytoplasm. In terms of biological role, sequence-specific endonuclease that cleaves unmethylated GATC sequences. It is involved in DNA mismatch repair. The chain is DNA mismatch repair protein MutH from Haemophilus influenzae (strain PittGG).